The primary structure comprises 459 residues: Glycosyl hydrolase family 109 protein (459 aa).

Positions 1–45 (MAGDESRSNPFSRRTLLRTSAAAGAGLGVAGLSTGYGAAQPVRPA) form a signal peptide, tat-type signal. Residues 70-71 (NR), Asp92, 141-144 (WEWH), 161-162 (EC), and Asn190 contribute to the NAD(+) site. Substrate is bound by residues Tyr219, Arg238, 250 to 253 (YPTH), and Tyr332. Residue Tyr250 coordinates NAD(+). A disordered region spans residues 440-459 (DFTRGRWQTPHPGVDSPKPA).

Belongs to the Gfo/Idh/MocA family. Glycosyl hydrolase 109 subfamily. NAD(+) serves as cofactor. Post-translationally, predicted to be exported by the Tat system. The position of the signal peptide cleavage has not been experimentally proven.

Glycosidase. In Saccharopolyspora erythraea (strain ATCC 11635 / DSM 40517 / JCM 4748 / NBRC 13426 / NCIMB 8594 / NRRL 2338), this protein is Glycosyl hydrolase family 109 protein.